Here is a 1114-residue protein sequence, read N- to C-terminus: M-phase phosphoprotein 9 (1114 aa).

Disordered regions lie at residues 1-55, 106-161, 183-207, 267-301, and 410-468; these read MEDF…KTGP, RPSC…DCHV, AKEPTEPLEPGAASQGQHPASVVQA, TSWAQRLKQNQSKQAHTEDDCSGPKPGSELNWKPP, and VLEP…STIP. Residues 24 to 51 are compositionally biased toward polar residues; sequence APQSLGLSLHANRSSPHLSTNGVSSFSG. Low complexity predominate over residues 106–119; it reads RPSCSSSSVSEQVS. The span at 149 to 161 shows a compositional bias: polar residues; that stretch reads QPASSTSYPDCHV. 2 stretches are compositionally biased toward polar residues: residues 267 to 280 and 429 to 446; these read TSWAQRLKQNQSKQ and HNPSQVSGFSKYPSTTRA. The tract at residues 368 to 729 is required for its centrosomal localization; sequence LSQVLTLDPG…EAQVKQAEHE (362 aa). The segment at 382 to 431 is interaction with CEP97; it reads KPKEHVAGIQAHGFLHALDDRISFSPDSVLEPSLSRHSDTDSSSQASHNP. The stretch at 574–733 forms a coiled coil; that stretch reads DRCGQLDSAL…KQAEHESMLS (160 aa). Ser710 carries the post-translational modification Phosphoserine; by TTBK2. Residue Lys713 forms a Glycyl lysine isopeptide (Lys-Gly) (interchain with G-Cter in ubiquitin) linkage. A Phosphoserine; by TTBK2 modification is found at Ser717. 3 disordered regions span residues 727 to 755, 840 to 931, and 975 to 1002; these read EHESMLSLRNGAKVPERPSRSNSVATSDV, SWGT…GFSH, and EEKKYSEKNSDDPVNPSSCPEHSPNGLK. Positions 730–963 are interaction with KIF24; that stretch reads SMLSLRNGAK…PVSTLQQTTA (234 aa). Positions 852–868 are enriched in polar residues; it reads SKLVNSRQTEPSVNTGR. Positions 881 to 898 are enriched in low complexity; that stretch reads QTSASQRSSSLPPSSRKA. Residue Ser926 is modified to Phosphoserine. Basic and acidic residues predominate over residues 975-985; it reads EEKKYSEKNSD. A coiled-coil region spans residues 1040 to 1105; sequence RTLAETERFF…GSVRMTLKKF (66 aa).

In terms of assembly, interacts with CCP110, CEP97 and KIF24. Post-translationally, TTBK2-mediated phosphorylation at Ser-710 and Ser-717, promotes its ubiquitination at Lys-713 leading to proteasomal degradation, loss of MPHOSPH9 facilitates the removal of the CP110-CEP97 complex from the mother centrioles, promoting the initiation of ciliogenesis. Phosphorylated in M (mitotic) phase. Ubiquitinated at Lys-713, leading to proteasomal degradation.

Its subcellular location is the cytoplasm. The protein localises to the cytoskeleton. It is found in the microtubule organizing center. The protein resides in the centrosome. It localises to the centriole. Its subcellular location is the golgi apparatus membrane. In terms of biological role, negatively regulates cilia formation by recruiting the CP110-CEP97 complex (a negative regulator of ciliogenesis) at the distal end of the mother centriole in ciliary cells. At the beginning of cilia formation, MPHOSPH9 undergoes TTBK2-mediated phosphorylation and degradation via the ubiquitin-proteasome system and removes itself and the CP110-CEP97 complex from the distal end of the mother centriole, which subsequently promotes cilia formation. The polypeptide is M-phase phosphoprotein 9 (Mphosph9) (Mus musculus (Mouse)).